Here is a 362-residue protein sequence, read N- to C-terminus: Serine/threonine-protein kinase SRK2E (362 aa).

Phosphoserine; by autocatalysis is present on residues Ser7, Ser18, Ser29, and Ser43. Residues 21–277 (YELVKDIGSG…IPEIRNHEWF (257 aa)) form the Protein kinase domain. 27–35 (IGSGNFGVA) is a binding site for ATP. Lys50 serves as a coordination point for ATP. Asp140 (proton acceptor) is an active-site residue. The segment at 160–186 (DFGYSKSSVLHSQPKSTVGTPAYIAPE) is activation loop. Ser175 bears the Phosphoserine mark. The tract at residues 283 to 318 (ADLMNDNTMTTQFDESDQPGQSIEEIMQIIAEATVP) is domain I; osmotic stress response, required for the kinase activity. The tract at residues 319–362 (PAGTQNLNHYLTGSLDIDDDMEEDLESDLDDLDIDSSGEIVYAM) is domain II; ABA response and ABI1 binding.

This sequence belongs to the protein kinase superfamily. Ser/Thr protein kinase family. Interacts with ABI1, PP2CA and SLAC1. Interacts with B'ALPHA, B'BETA, B'DELTA, PP2AA2, PP2AA3, PP2A1 and PP2A2. Associates with MAPKKK18 within the nucleus. Interacts with I-2, TOPP1 and TOPP2. Interacts with ABI2. In terms of processing, autophosphorylation on residues Ser-7, Ser-18, Ser-29, Ser-43, Ser-175 and/or Thr-176. Only the phosphorylation of Ser-175 is crucial for the kinase activity. The phosphorylation of Ser-43 may repress the ABA signaling pathway in absence of ABA. As to expression, expressed in seedlings, leaves, flowers, stems, and roots, but restricted to guard cells and vascular tissue.

The protein localises to the nucleus. It carries out the reaction L-seryl-[protein] + ATP = O-phospho-L-seryl-[protein] + ADP + H(+). The enzyme catalyses L-threonyl-[protein] + ATP = O-phospho-L-threonyl-[protein] + ADP + H(+). With respect to regulation, kinase activity enhanced by ABA and low humidity. Repressed by PP2CA independently of its phosphatase activity. Probably inactivated by ABI1. Repressed by TOPP1. Negatively regulated by ABI2. Its function is as follows. Activator of the abscisic acid (ABA) signaling pathway that regulates numerous ABA responses, such as stomata closure in response to drought, darkness, high CO(2), plant pathogens, or decreases in atmospheric relative humidity (RH). Involved in the resistance to drought by avoiding water loss. Required for the stomata closure mediated by pathogen-associated molecular pattern (PAMPs) (e.g. flg22 and LPS) of pathogenic bacteria such as P.syringae pv. tomato (Pst) and E.coli O157:H7. As a plant defense process, stomata are closed transiently in order to limit invaders, but actively reopened by bacteria after a few hours; virulent strains (e.g. Pst DC3000) are more efficient than avirulent strains (e.g. Pst DC3000 AvrRpt2) in reopening stomata. Mediates the phosphorylation and activation of the S-type anion efflux channel SLAC1, and thus promotes stomata closure. Essential for stomatal closure in response to reactive oxygen species (ROS). Promotes MAPKKK18 activity upon abscisic acid (ABA) treatment. The polypeptide is Serine/threonine-protein kinase SRK2E (Arabidopsis thaliana (Mouse-ear cress)).